A 548-amino-acid chain; its full sequence is Chaperonin GroEL (548 aa).

Residues Thr30–Pro33, Lys51, Asp87–Thr91, Gly415, and Asn479–Val481 contribute to the ATP site.

This sequence belongs to the chaperonin (HSP60) family. As to quaternary structure, forms a cylinder of 14 subunits composed of two heptameric rings stacked back-to-back. Interacts with the co-chaperonin GroES.

The protein resides in the cytoplasm. It catalyses the reaction ATP + H2O + a folded polypeptide = ADP + phosphate + an unfolded polypeptide.. Its function is as follows. Together with its co-chaperonin GroES, plays an essential role in assisting protein folding. The GroEL-GroES system forms a nano-cage that allows encapsulation of the non-native substrate proteins and provides a physical environment optimized to promote and accelerate protein folding. This chain is Chaperonin GroEL, found in Stenotrophomonas maltophilia (Pseudomonas maltophilia).